Reading from the N-terminus, the 258-residue chain is Small ribosomal subunit protein uS2 (258 aa).

The protein belongs to the universal ribosomal protein uS2 family.

This is Small ribosomal subunit protein uS2 from Leuconostoc mesenteroides subsp. mesenteroides (strain ATCC 8293 / DSM 20343 / BCRC 11652 / CCM 1803 / JCM 6124 / NCDO 523 / NBRC 100496 / NCIMB 8023 / NCTC 12954 / NRRL B-1118 / 37Y).